A 287-amino-acid polypeptide reads, in one-letter code: uncharacterized protein (287 aa).

The 107-residue stretch at 133-239 (CEVGKTKKMT…KNIIGISIVQ (107 aa)) folds into the THUMP domain. Positions 257-287 (ENTKSIPNDSKLDNFDRDKNQIINDKAEHAE) are disordered. Positions 266–287 (SKLDNFDRDKNQIINDKAEHAE) are enriched in basic and acidic residues.

This is an uncharacterized protein from Schizosaccharomyces pombe (strain 972 / ATCC 24843) (Fission yeast).